A 435-amino-acid polypeptide reads, in one-letter code: Type A flavoprotein fprA (435 aa).

The segment at Ala48–Leu228 is zinc metallo-hydrolase. Positions 98, 100, 102, 167, 186, and 243 each coordinate Fe cation. One can recognise a Flavodoxin-like domain in the interval Leu276 to Ala415.

This sequence in the N-terminal section; belongs to the zinc metallo-hydrolase group 3 family. In terms of assembly, homodimer. The cofactor is FMN. Fe cation is required as a cofactor.

Low-potential electron donor to a number of redox enzymes. In Rhodobacter capsulatus (strain ATCC BAA-309 / NBRC 16581 / SB1003), this protein is Type A flavoprotein fprA (fprA).